The following is a 148-amino-acid chain: Large ribosomal subunit protein uL15B (148 aa).

2 stretches are compositionally biased toward basic residues: residues 1-13 and 21-31; these read MPTH…KLRG and RIGKHRKHPGG. The interval 1–38 is disordered; the sequence is MPTHTSKTRKLRGHVSAGHGRIGKHRKHPGGRGKAGGL. Y108 is modified (phosphotyrosine).

The protein belongs to the universal ribosomal protein uL15 family. In terms of assembly, component of the large ribosomal subunit (LSU). Mature yeast ribosomes consist of a small (40S) and a large (60S) subunit. The 40S small subunit contains 1 molecule of ribosomal RNA (18S rRNA) and at least 33 different proteins. The large 60S subunit contains 3 rRNA molecules (25S, 5.8S and 5S rRNA) and at least 46 different proteins.

The protein resides in the cytoplasm. The protein localises to the nucleus. It localises to the nucleolus. Functionally, component of the ribosome, a large ribonucleoprotein complex responsible for the synthesis of proteins in the cell. The small ribosomal subunit (SSU) binds messenger RNAs (mRNAs) and translates the encoded message by selecting cognate aminoacyl-transfer RNA (tRNA) molecules. The large subunit (LSU) contains the ribosomal catalytic site termed the peptidyl transferase center (PTC), which catalyzes the formation of peptide bonds, thereby polymerizing the amino acids delivered by tRNAs into a polypeptide chain. The nascent polypeptides leave the ribosome through a tunnel in the LSU and interact with protein factors that function in enzymatic processing, targeting, and the membrane insertion of nascent chains at the exit of the ribosomal tunnel. The sequence is that of Large ribosomal subunit protein uL15B (rpl2801) from Schizosaccharomyces pombe (strain 972 / ATCC 24843) (Fission yeast).